Reading from the N-terminus, the 524-residue chain is Importin subunit alpha-1 (524 aa).

Residues 1–42 are disordered; that stretch reads MGDEFRPSHEERSKMYKSNVRDQNEMRRKRREDEVQIRKNRR. One can recognise an IBB domain in the interval 1-59; the sequence is MGDEFRPSHEERSKMYKSNVRDQNEMRRKRREDEVQIRKNRRDEKFERNRQITVQRSLS.

The protein belongs to the importin alpha family. In terms of assembly, forms a complex with an importin beta subunit. In terms of tissue distribution, adult germline tissues.

The protein resides in the cytoplasm. Functionally, binds specifically and directly to substrates containing either a simple or bipartite NLS motif. Promotes docking of import substrates to the nuclear envelope. Seems to act as a cytosolic receptor for both simple and bipartite NLS motifs. The chain is Importin subunit alpha-1 (ima-1) from Caenorhabditis elegans.